We begin with the raw amino-acid sequence, 265 residues long: Short-chain dehydrogenase/reductase phqE (265 aa).

10 residues coordinate NADP(+): Thr23, Ser24, Ile26, Ser46, Asn47, Lys50, Asp76, Arg131, Val203, and Thr205. Residues 25–45 (GIGFAVCAAALGHGAIVTIVG) form a helical membrane-spanning segment.

The protein belongs to the short-chain dehydrogenases/reductases (SDR) family. NADP(+) is required as a cofactor.

It localises to the membrane. It participates in alkaloid biosynthesis. Short-chain dehydrogenase/reductase; part of the gene cluster that mediates the biosynthesis of paraherquamide, a fungal indole alkaloid that belongs to a family of natural products containing a characteristic bicyclo[2.2.2]diazaoctane core. The first steps in the biosynthesis of paraherquamide is the production of the beta-methyl-proline precursor from L-isoleucine. They require oxidation of a terminally hydroxylated L-isoleucine to the corresponding aldehyde by enzymes which have still to be identified. Spontaneous cyclization and dehydration would yield the 4-methyl pyrolline-5-carboxylic acid, which is then reduced by the pyrroline-5-carboxylate reductase phqD leading to the beta-methyl-proline precursor. The next step of paraherquamide biosynthesis involves coupling of beta-methyl-proline and L-tryptophan by the bimodular NRPS phqB, to produce a monooxopiperazine intermediate. The reductase (R) domain of phqB utilizes NADPH for hydride transfer to reduce the thioester bond of the T domain-tethered linear dipeptide to a hemithioaminal intermediate, which spontaneously cleaves the C-S bond to release the aldehyde product. This compound undergoes spontaneous cyclization and dehydration to give a dienamine which is reverse prenylated at C-2 by the reverse prenyltransferase phqJ. The other prenyltransferase present in the cluster, phqI may be a redundant gene in the pathway. During biosynthetic assembly, the key step to produce the polycyclic core is catalyzed by the bifunctional reductase and intramolecular [4+2] Diels-Alderase, phqE, resulting in formation of the [2.2.2] diazaoctane intermediate preparaherquamide. Following formation of preparaherquamide, an indole 2,3-epoxidation-initiated pinacol-like rearrangement is catalyzed by the phqK FAD-dependent monooxygenase. The prenyltransferase phqA, the cytochrome P450 monooxygenase phqL, and the FAD-linked oxidoreductase phqH (or the cytochrome P450 monooxygenase phqM), are proposed to be involved in the formation of the pyran ring. The FAD-dependent monooxygenase phqK is likely responsible for generation of the spiro-oxindole, and the N-methylation is likely mediated by the phqN methyltransferase leading to the isolable natural product paraherquamide F. However, the order of these biosynthetic steps has still to be determined. In late-stage paraherquamide biosynthesis, the third P450 monooxygenase, phqO, is probably responsible for the C-14 hydroxylation, transforming paraherquamide F to paraherquamide G, and paraherquamide E to the final product paraherquamide A. The expansion from the 6-membered ring pyran (in paraherquamides F and G) to the 7-membered dioxepin ring (in paraherquamides A and E) represents a poorly understood but intriguing process that probably involves the 2-oxoglutarate-dependent dioxygenase phqC. Finally, the remaining members of the paraherquamide cluster, including phqI as well as phqM (or phqH), do not have a clearly prescribed role and appear to be redundant. The chain is Short-chain dehydrogenase/reductase phqE from Penicillium fellutanum.